The following is a 240-amino-acid chain: Small ribosomal subunit protein uS2 (240 aa).

This sequence belongs to the universal ribosomal protein uS2 family.

This Haemophilus influenzae (strain 86-028NP) protein is Small ribosomal subunit protein uS2.